Consider the following 180-residue polypeptide: Trafficking protein particle complex subunit 3 (180 aa).

Cysteine 68 carries S-palmitoyl cysteine lipidation.

This sequence belongs to the TRAPP small subunits family. BET3 subfamily. As to quaternary structure, homodimer. Component of the multisubunit transport protein particle (TRAPP) complex, which includes at least TRAPPC2, TRAPPC2L, TRAPPC3, TRAPPC3L, TRAPPC4, TRAPPC5, TRAPPC8, TRAPPC9, TRAPPC10, TRAPPC11 and TRAPPC12. Heterodimer with TRAPPC6A. The heterodimer TRAPPC3-TRAPPC6A interacts with TRAPPC2L. Heterodimer with TRAPPC6b. The heterodimer TRAPPC6B-TRAPPC3 interacts with TRAPPC1 likely providing a core for TRAPP complex formation. In terms of tissue distribution, widely expressed. Expressed in lung, heart, liver, spleen, brain and kidney.

Its subcellular location is the golgi apparatus. It is found in the cis-Golgi network. The protein localises to the endoplasmic reticulum. Its function is as follows. May play a role in vesicular transport from endoplasmic reticulum to Golgi. In Mus musculus (Mouse), this protein is Trafficking protein particle complex subunit 3.